We begin with the raw amino-acid sequence, 90 residues long: Phosphoribosyl-ATP pyrophosphatase (90 aa).

This sequence belongs to the PRA-PH family.

The protein resides in the cytoplasm. It catalyses the reaction 1-(5-phospho-beta-D-ribosyl)-ATP + H2O = 1-(5-phospho-beta-D-ribosyl)-5'-AMP + diphosphate + H(+). It participates in amino-acid biosynthesis; L-histidine biosynthesis; L-histidine from 5-phospho-alpha-D-ribose 1-diphosphate: step 2/9. The sequence is that of Phosphoribosyl-ATP pyrophosphatase from Streptomyces avermitilis (strain ATCC 31267 / DSM 46492 / JCM 5070 / NBRC 14893 / NCIMB 12804 / NRRL 8165 / MA-4680).